Consider the following 292-residue polypeptide: MNFQSVIATLNQFWADRGCLIAQPYDTEKGAGTMNPHTFLRAIGPEPWAVAYVEPCRRPTDGRYGENPNRYQHYYQYQVLIKPSPEGIQETYLDSLRALGIQPEEHDIRFVEDNWESPTLGAWGVGWEVWLDGMEVTQFTYFQQCGGIDCRPVSIEITYGLERLAMYLQNVEAFTEIKWTDRLSYGDVHLQSEIEQCTYNFEASTPELLFQLFGLYEQEATQLIEKGLVHPSLDYVLKCSHSFNLLDARGLISVTERTRYIGRIRNMARQVAKLYLEQREQLGFPLLQKVTA.

The protein belongs to the class-II aminoacyl-tRNA synthetase family. As to quaternary structure, tetramer of two alpha and two beta subunits.

The protein localises to the cytoplasm. The enzyme catalyses tRNA(Gly) + glycine + ATP = glycyl-tRNA(Gly) + AMP + diphosphate. The sequence is that of Glycine--tRNA ligase alpha subunit from Synechococcus elongatus (strain ATCC 33912 / PCC 7942 / FACHB-805) (Anacystis nidulans R2).